The following is a 298-amino-acid chain: uncharacterized protein (298 aa).

Asp-119 is an active-site residue.

It belongs to the pseudouridine synthase RluA family.

It catalyses the reaction a uridine in RNA = a pseudouridine in RNA. This is an uncharacterized protein from Helicobacter pylori (strain ATCC 700392 / 26695) (Campylobacter pylori).